The chain runs to 301 residues: Multifunctional dioxygenase ausE (301 aa).

Residues Arg-72 and Gln-127 each coordinate substrate. The Fe cation site is built by His-130 and Asp-132. Thr-167 contacts substrate. A Fe cation-binding site is contributed by His-214. A substrate-binding site is contributed by Arg-226.

It belongs to the PhyH family. In terms of assembly, homodimer. Fe cation serves as cofactor.

It carries out the reaction preaustinoid A1 + 2-oxoglutarate + O2 = preaustinoid A2 + succinate + CO2 + H2O. It catalyses the reaction preaustinoid A2 + 2-oxoglutarate + O2 = preaustinoid A3 + succinate + CO2 + H2O. The catalysed reaction is berkeleyone A + 2-oxoglutarate + O2 = preaustinoid A + succinate + CO2 + H2O. It functions in the pathway secondary metabolite biosynthesis; terpenoid biosynthesis. Multifunctional dioxygenase; part of the gene cluster A that mediates the biosynthesis of the fungal meroterpenoid acetoxydehydroaustin. The first step of the pathway is the synthesis of 3,5-dimethylorsellinic acid by the polyketide synthase ausA. 3,5-dimethylorsellinic acid is then prenylated by the polyprenyl transferase ausN. Further epoxidation by the FAD-dependent monooxygenase ausM and cyclization by the probable terpene cyclase ausL lead to the formation of protoaustinoid A. Protoaustinoid A is then oxidized to spiro-lactone preaustinoid A3 by the combined action of the FAD-binding monooxygenases ausB and ausC, and the dioxygenase ausE. Acid-catalyzed keto-rearrangement and ring contraction of the tetraketide portion of preaustinoid A3 by ausJ lead to the formation of preaustinoid A4. The aldo-keto reductase ausK, with the help of ausH, is involved in the next step by transforming preaustinoid A4 into isoaustinone which is in turn hydroxylated by the P450 monooxygenase ausI to form austinolide. The cytochrome P450 monooxygenase ausG then modifies austinolide to austinol. Austinol is further acetylated to austin by the O-acetyltransferase ausP, which spontaneously changes to dehydroaustin. The cytochrome P450 monooxygenase then converts dehydroaustin is into 7-dehydrodehydroaustin. The hydroxylation catalyzed by ausR permits the second O-acetyltransferase ausQ to add an additional acetyl group to the molecule, leading to the formation of acetoxydehydroaustin. Due to genetic rearrangements of the clusters and the subsequent loss of some enzymes, the end product of the Penicillium brasilianum austinoid biosynthesis clusters is acetoxydehydroaustin. The chain is Multifunctional dioxygenase ausE from Penicillium brasilianum.